Here is a 78-residue protein sequence, read N- to C-terminus: Bowman-Birk type proteinase inhibitors I-A, I-B, and I-A' (78 aa).

7 disulfides stabilise this stretch: Cys-18-Cys-72, Cys-19-Cys-34, Cys-22-Cys-68, Cys-24-Cys-32, Cys-42-Cys-49, Cys-46-Cys-61, and Cys-51-Cys-59.

This sequence belongs to the Bowman-Birk serine protease inhibitor family.

Functionally, these inhibitors strongly inhibit trypsin. In Phaseolus angularis (Azuki bean), this protein is Bowman-Birk type proteinase inhibitors I-A, I-B, and I-A'.